We begin with the raw amino-acid sequence, 225 residues long: Ribosomal RNA small subunit methyltransferase G (225 aa).

S-adenosyl-L-methionine is bound by residues Gly89, Leu94, 140 to 141, and Arg157; that span reads IE.

It belongs to the methyltransferase superfamily. RNA methyltransferase RsmG family.

Its subcellular location is the cytoplasm. It catalyses the reaction guanosine(527) in 16S rRNA + S-adenosyl-L-methionine = N(7)-methylguanosine(527) in 16S rRNA + S-adenosyl-L-homocysteine. Specifically methylates the N7 position of guanine in position 527 of 16S rRNA. This Psychrobacter sp. (strain PRwf-1) protein is Ribosomal RNA small subunit methyltransferase G.